The following is a 442-amino-acid chain: Elongation factor 1-alpha (442 aa).

Positions 5–228 (KTHINIVVIG…DSVTPPERPV (224 aa)) constitute a tr-type G domain. Residues 14 to 21 (GHVDSGKS) form a G1 region. 14 to 21 (GHVDSGKS) is a binding site for GTP. A G2 region spans residues 70 to 74 (GITID). The interval 91-94 (DAPG) is G3. Residues 91–95 (DAPGH) and 153–156 (NKMD) each bind GTP. Residues 153–156 (NKMD) form a G4 region. The segment at 192–194 (SGF) is G5.

The protein belongs to the TRAFAC class translation factor GTPase superfamily. Classic translation factor GTPase family. EF-Tu/EF-1A subfamily.

The protein localises to the cytoplasm. This protein promotes the GTP-dependent binding of aminoacyl-tRNA to the A-site of ribosomes during protein biosynthesis. The chain is Elongation factor 1-alpha from Entamoeba histolytica (strain ATCC 30459 / HM-1:IMSS / ABRM).